A 181-amino-acid chain; its full sequence is Bradykinin-potentiating and C-type natriuretic peptides (181 aa).

An N-terminal signal peptide occupies residues 1–23 (MFVSRLAASGLLLLALLAVSLDG). Residues 24-30 (KPLQQWS) constitute a propeptide that is removed on maturation. Gln31 carries the post-translational modification Pyrrolidone carboxylic acid. A propeptide spanning residues 41–43 (LVV) is cleaved from the precursor. Position 44 is a pyrrolidone carboxylic acid (Gln44). 2 consecutive propeptides follow at residues 50–78 (TQLQ…AALD) and 90–157 (GSKA…KGLA). The disordered stretch occupies residues 74 to 153 (EAALDTPPAG…GGGGGGARRL (80 aa)). Residues 104–114 (SKGASATSAAS) are compositionally biased toward low complexity. The segment covering 140–150 (AGGGGGGGGGA) has biased composition (gly residues). Cys165 and Cys181 form a disulfide bridge.

It in the N-terminal section; belongs to the bradykinin-potentiating peptide family. The protein in the C-terminal section; belongs to the natriuretic peptide family. Venom gland.

The protein localises to the secreted. Functionally, bradykinin-potentiating peptide both inhibits the activity of the angiotensin-converting enzyme (ACE) and enhances the action of bradykinin by inhibiting the peptidases that inactivate it. It acts as an indirect hypotensive agent. In terms of biological role, antagonizes the vasodilatory actions of bradykinin at the B2 bradykinin receptor. Has no demonstrable hypotensive activity when injected intravenously in rats. Its function is as follows. has a vasorelaxant activity in rat aortic strips and a diuretic potency in anesthetized rats. May act by activating natriuretic receptors (NPR1 and/or NPR2). This is Bradykinin-potentiating and C-type natriuretic peptides from Crotalus durissus collilineatus (Brazilian rattlesnake).